Reading from the N-terminus, the 548-residue chain is Chaperonin GroEL (548 aa).

ATP contacts are provided by residues 30-33 (TLGP), Lys51, 87-91 (DGTTT), Gly415, 479-481 (NAA), and Asp495.

The protein belongs to the chaperonin (HSP60) family. Forms a cylinder of 14 subunits composed of two heptameric rings stacked back-to-back. Interacts with the co-chaperonin GroES.

The protein resides in the cytoplasm. It catalyses the reaction ATP + H2O + a folded polypeptide = ADP + phosphate + an unfolded polypeptide.. Functionally, together with its co-chaperonin GroES, plays an essential role in assisting protein folding. The GroEL-GroES system forms a nano-cage that allows encapsulation of the non-native substrate proteins and provides a physical environment optimized to promote and accelerate protein folding. In Pseudomonas fluorescens (strain SBW25), this protein is Chaperonin GroEL.